The sequence spans 155 residues: SsrA-binding protein (155 aa).

This sequence belongs to the SmpB family.

The protein resides in the cytoplasm. Required for rescue of stalled ribosomes mediated by trans-translation. Binds to transfer-messenger RNA (tmRNA), required for stable association of tmRNA with ribosomes. tmRNA and SmpB together mimic tRNA shape, replacing the anticodon stem-loop with SmpB. tmRNA is encoded by the ssrA gene; the 2 termini fold to resemble tRNA(Ala) and it encodes a 'tag peptide', a short internal open reading frame. During trans-translation Ala-aminoacylated tmRNA acts like a tRNA, entering the A-site of stalled ribosomes, displacing the stalled mRNA. The ribosome then switches to translate the ORF on the tmRNA; the nascent peptide is terminated with the 'tag peptide' encoded by the tmRNA and targeted for degradation. The ribosome is freed to recommence translation, which seems to be the essential function of trans-translation. The sequence is that of SsrA-binding protein from Streptococcus pneumoniae (strain 70585).